The primary structure comprises 447 residues: Phosphoglucosamine mutase (447 aa).

Residue serine 107 is the Phosphoserine intermediate of the active site. Residues serine 107, aspartate 246, aspartate 248, and aspartate 250 each contribute to the Mg(2+) site. Serine 107 is subject to Phosphoserine.

Belongs to the phosphohexose mutase family. The cofactor is Mg(2+). In terms of processing, activated by phosphorylation.

It catalyses the reaction alpha-D-glucosamine 1-phosphate = D-glucosamine 6-phosphate. Its function is as follows. Catalyzes the conversion of glucosamine-6-phosphate to glucosamine-1-phosphate. The sequence is that of Phosphoglucosamine mutase from Ralstonia pickettii (strain 12J).